We begin with the raw amino-acid sequence, 396 residues long: Ornithine aminotransferase (396 aa).

Position 255 is an N6-(pyridoxal phosphate)lysine (K255).

Belongs to the class-III pyridoxal-phosphate-dependent aminotransferase family. OAT subfamily. It depends on pyridoxal 5'-phosphate as a cofactor.

Its subcellular location is the cytoplasm. It carries out the reaction a 2-oxocarboxylate + L-ornithine = L-glutamate 5-semialdehyde + an L-alpha-amino acid. The protein operates within amino-acid biosynthesis; L-proline biosynthesis; L-glutamate 5-semialdehyde from L-ornithine: step 1/1. Its function is as follows. Catalyzes the interconversion of ornithine to glutamate semialdehyde. The protein is Ornithine aminotransferase of Bacillus cereus (strain 03BB102).